The primary structure comprises 822 residues: Microcephalin (822 aa).

The 90-residue stretch at 10 to 99 (AFLKDVVAYV…ALVDESLFPA (90 aa)) folds into the BRCT 1 domain. 3 disordered regions span residues 182–203 (MKEK…SQQN), 219–243 (PLSS…DQER), and 266–295 (SSFY…ESIN). 2 stretches are compositionally biased toward polar residues: residues 189-203 (LSPT…SQQN) and 219-235 (PLSS…SSFG). A phosphoserine mark is found at serine 273, serine 290, and serine 327. Phosphothreonine is present on threonine 329. Disordered stretches follow at residues 335-366 (EHQV…LKKR), 498-567 (NDSP…SPED), and 594-636 (TGYS…PTRT). Residues 522–541 (HPDTLSSSAHHITPLKGNST) show a composition bias toward polar residues. Basic and acidic residues-rich tracts occupy residues 542 to 553 (ETRDPGDGKGSP) and 625 to 634 (KKSEKEEKPT). BRCT domains follow at residues 627–717 (SEKE…PFEL) and 738–820 (YQGT…NYQL).

In terms of assembly, interacts with CDC27 and maybe other components of the APC/C complex. Interacts with histone variant H2AX under DNA damage conditions. As to expression, high levels of expression are found in the developing forebrain and, in particular, in the walls of the lateral ventricles.

It localises to the cytoplasm. Its subcellular location is the cytoskeleton. The protein localises to the microtubule organizing center. The protein resides in the centrosome. Implicated in chromosome condensation and DNA damage induced cellular responses. May play a role in neurogenesis and regulation of the size of the cerebral cortex. The chain is Microcephalin from Mus musculus (Mouse).